The following is a 186-amino-acid chain: Der GTPase-activating protein YihI (186 aa).

The tract at residues 1–65 (MARTKKTRRI…AGSRHSAVDT (65 aa)) is disordered. Basic and acidic residues-rich tracts occupy residues 9–25 (RITD…RPEN) and 34–45 (TRYELDAKSREE).

This sequence belongs to the YihI family. Interacts with Der.

Functionally, a GTPase-activating protein (GAP) that modifies Der/EngA GTPase function. May play a role in ribosome biogenesis. The polypeptide is Der GTPase-activating protein YihI (Histophilus somni (strain 129Pt) (Haemophilus somnus)).